A 164-amino-acid chain; its full sequence is Transcription elongation factor GreA (164 aa).

It belongs to the GreA/GreB family.

Necessary for efficient RNA polymerase transcription elongation past template-encoded arresting sites. The arresting sites in DNA have the property of trapping a certain fraction of elongating RNA polymerases that pass through, resulting in locked ternary complexes. Cleavage of the nascent transcript by cleavage factors such as GreA or GreB allows the resumption of elongation from the new 3'terminus. GreA releases sequences of 2 to 3 nucleotides. The sequence is that of Transcription elongation factor GreA from Helicobacter pylori (strain Shi470).